Here is a 23-residue protein sequence, read N- to C-terminus: Basic phospholipase A2 homolog CTs-K49c (23 aa).

Post-translationally, contains 7 disulfide bonds. As to expression, expressed by the venom gland.

The protein localises to the secreted. In terms of biological role, snake venom phospholipase A2 homolog that lacks catalytic activity. Shows myotoxic activities. Induces local edema a few hours after injection (5-10 ug) in the hind paw. This chain is Basic phospholipase A2 homolog CTs-K49c, found in Trimeresurus stejnegeri (Chinese green tree viper).